The chain runs to 59 residues: U-scoloptoxin(23)-Er2a (59 aa).

It belongs to the scoloptoxin-23 family. Contains 1 disulfide bond. In terms of tissue distribution, expressed by the venom gland.

It is found in the secreted. This is U-scoloptoxin(23)-Er2a from Ethmostigmus rubripes (Giant centipede).